The sequence spans 154 residues: 3-dehydroquinate dehydratase (154 aa).

Residue Y23 is the Proton acceptor of the active site. The substrate site is built by N75, H81, and D88. H101 acts as the Proton donor in catalysis. Residues 102-103 (LS) and R112 contribute to the substrate site.

It belongs to the type-II 3-dehydroquinase family. Homododecamer.

The enzyme catalyses 3-dehydroquinate = 3-dehydroshikimate + H2O. The protein operates within metabolic intermediate biosynthesis; chorismate biosynthesis; chorismate from D-erythrose 4-phosphate and phosphoenolpyruvate: step 3/7. Catalyzes a trans-dehydration via an enolate intermediate. The chain is 3-dehydroquinate dehydratase from Teredinibacter turnerae (strain ATCC 39867 / T7901).